We begin with the raw amino-acid sequence, 1360 residues long: DNA mismatch repair protein Msh6 (1360 aa).

A disordered region spans residues 1-84 (MSRQSTLYSF…GLRRSVAPAA (84 aa)). Ser-14, Ser-41, and Ser-43 each carry phosphoserine. A compositionally biased stretch (low complexity) spans 33-51 (RAAAAPGASPSPGGDAAWS). Lys-70 is subject to N6-acetyllysine. 6 positions are modified to phosphoserine: Ser-79, Ser-91, Ser-137, Ser-200, Ser-219, and Ser-227. Residues 92 to 154 (PGDLVWAKME…KRLLKPYTGS (63 aa)) form the PWWP domain. The disordered stretch occupies residues 195-362 (VCDEPSEPEE…SGGGDDSSRP (168 aa)). Composition is skewed to acidic residues over residues 198–209 (EPSEPEEEEEME) and 219–230 (SEEDNEIESEEE). Basic residues predominate over residues 240–249 (RSSRQIKKRR). Phosphoserine occurs at positions 252, 254, 256, and 261. The span at 263–273 (VEFKPDTKEEG) shows a compositional bias: basic and acidic residues. Thr-269 bears the Phosphothreonine mark. Phosphoserine is present on residues Ser-274, Ser-275, Ser-279, Ser-280, and Ser-309. Residues 320–351 (PSATKQATSISSETKNTLRAFSAPQNSESQAH) show a composition bias toward polar residues. Thr-488 carries the post-translational modification Phosphothreonine. Residue Lys-504 is modified to N6-acetyllysine. 2 positions are modified to phosphoserine: Ser-830 and Ser-935. Thr-1010 bears the Phosphothreonine mark. ATP is bound at residue 1134–1141 (GPNMGGKS).

Belongs to the DNA mismatch repair MutS family. In terms of assembly, component of the DNA mismatch repair (MMR) complex composed at least of MSH2, MSH3, MSH6, PMS1 and MLH1. Heterodimer consisting of MSH2-MSH6 (MutS alpha). Forms a ternary complex with MutL alpha (MLH1-PMS1). Interacts with MCM9. Part of the BRCA1-associated genome surveillance complex (BASC), which contains BRCA1, MSH2, MSH6, MLH1, ATM, BLM, PMS2 and the RAD50-MRE11-NBS1 protein complex. This association could be a dynamic process changing throughout the cell cycle and within subnuclear domains. (Microbial infection) Interacts with herpes simplex virus 1 protein UL12. In terms of processing, the N-terminus is blocked. Phosphorylated by PRKCZ, which may prevent MutS alpha degradation by the ubiquitin-proteasome pathway.

The protein localises to the nucleus. It localises to the chromosome. Component of the post-replicative DNA mismatch repair system (MMR). Heterodimerizes with MSH2 to form MutS alpha, which binds to DNA mismatches thereby initiating DNA repair. When bound, MutS alpha bends the DNA helix and shields approximately 20 base pairs, and recognizes single base mismatches and dinucleotide insertion-deletion loops (IDL) in the DNA. After mismatch binding, forms a ternary complex with the MutL alpha heterodimer, which is thought to be responsible for directing the downstream MMR events, including strand discrimination, excision, and resynthesis. ATP binding and hydrolysis play a pivotal role in mismatch repair functions. The ATPase activity associated with MutS alpha regulates binding similar to a molecular switch: mismatched DNA provokes ADP--&gt;ATP exchange, resulting in a discernible conformational transition that converts MutS alpha into a sliding clamp capable of hydrolysis-independent diffusion along the DNA backbone. This transition is crucial for mismatch repair. MutS alpha may also play a role in DNA homologous recombination repair. Recruited on chromatin in G1 and early S phase via its PWWP domain that specifically binds trimethylated 'Lys-36' of histone H3 (H3K36me3): early recruitment to chromatin to be replicated allowing a quick identification of mismatch repair to initiate the DNA mismatch repair reaction. The sequence is that of DNA mismatch repair protein Msh6 from Homo sapiens (Human).